The primary structure comprises 652 residues: Sodium-dependent nutrient amino acid transporter 1 (652 aa).

The interval 1–54 (MELKGVHQQNGTSNGTGAVGAEGESAPPTAPATAEAAASLETTTEKVDAEQQKP) is disordered. Residues 1–58 (MELKGVHQQNGTSNGTGAVGAEGESAPPTAPATAEAAASLETTTEKVDAEQQKPERTN) are Cytoplasmic-facing. Over residues 7 to 16 (HQQNGTSNGT) the composition is skewed to polar residues. A compositionally biased stretch (low complexity) spans 21–42 (AEGESAPPTAPATAEAAASLET). The segment covering 43-54 (TTEKVDAEQQKP) has biased composition (basic and acidic residues). Helical transmembrane passes span 59–79 (WGNG…LGNV), 92–112 (GAFL…MYYL), 130–150 (VVPG…CIIT), and 155–175 (LLAL…PWSY). Asparagine 201 and asparagine 204 each carry an N-linked (GlcNAc...) asparagine glycan. The next 9 membrane-spanning stretches (helical) occupy residues 240–260 (PDWK…LVIM), 269–289 (AAYF…VRAV), 318–338 (AVVQ…MFAS), 352–372 (IVTT…FAIL), 412–432 (LFSV…IVAL), 458–478 (ICGF…ILTL), 485–505 (TYVV…IYGM), 527–547 (CWSF…MVTI), and 564–584 (AGWL…MWYI).

This sequence belongs to the sodium:neurotransmitter symporter (SNF) (TC 2.A.22) family.

The protein resides in the membrane. Unusual broad substrate spectrum amino acid:sodium cotransporter that promotes absorption of the D isomers of essential amino acids. Neutral amino acids are the preferred substrates, especially methionine and phenylalanine. The chain is Sodium-dependent nutrient amino acid transporter 1 from Drosophila persimilis (Fruit fly).